We begin with the raw amino-acid sequence, 20 residues long: 21 kDa cold shock-induced protein (20 aa).

Residues 1 to 12 (TDSIKETIKETV) are compositionally biased toward basic and acidic residues. A disordered region spans residues 1–20 (TDSIKETIKETVNHQAEWPY).

This is 21 kDa cold shock-induced protein from Streptococcus thermophilus.